The sequence spans 250 residues: FAS1 domain-containing protein AER383W (250 aa).

Positions 1–18 are cleaved as a signal peptide; the sequence is MRLKTILLGFCAFHVARS. An FAS1 domain is found at 87–247; it reads GVTLDDRLQS…GIVLVIDSSL (161 aa).

It localises to the vacuole. The polypeptide is FAS1 domain-containing protein AER383W (Eremothecium gossypii (strain ATCC 10895 / CBS 109.51 / FGSC 9923 / NRRL Y-1056) (Yeast)).